We begin with the raw amino-acid sequence, 320 residues long: Tyrosine phosphatase H3 (320 aa).

The 288-residue stretch at 22–309 (NFWEFVRLEH…AFCYKAVRYA (288 aa)) folds into the Tyrosine-protein phosphatase domain. Catalysis depends on Cys-250, which acts as the Phosphocysteine intermediate.

The protein belongs to the protein-tyrosine phosphatase family.

It catalyses the reaction O-phospho-L-tyrosyl-[protein] + H2O = L-tyrosyl-[protein] + phosphate. Functionally, suppresses host immune cell adhesion and phagocytosis. The polypeptide is Tyrosine phosphatase H3 (H3) (Microplitis demolitor (Parasitoid wasp)).